A 98-amino-acid polypeptide reads, in one-letter code: Putative membrane protein insertion efficiency factor (98 aa).

The protein belongs to the UPF0161 family.

It localises to the cell inner membrane. In terms of biological role, could be involved in insertion of integral membrane proteins into the membrane. In Cupriavidus pinatubonensis (strain JMP 134 / LMG 1197) (Cupriavidus necator (strain JMP 134)), this protein is Putative membrane protein insertion efficiency factor.